Here is a 423-residue protein sequence, read N- to C-terminus: Enolase (423 aa).

Q162 contributes to the (2R)-2-phosphoglycerate binding site. E204 functions as the Proton donor in the catalytic mechanism. Residues D241, E284, and D311 each contribute to the Mg(2+) site. Residues K336, R365, S366, and K387 each contribute to the (2R)-2-phosphoglycerate site. The active-site Proton acceptor is K336.

This sequence belongs to the enolase family. Mg(2+) serves as cofactor.

The protein localises to the cytoplasm. It is found in the secreted. Its subcellular location is the cell surface. The catalysed reaction is (2R)-2-phosphoglycerate = phosphoenolpyruvate + H2O. It participates in carbohydrate degradation; glycolysis; pyruvate from D-glyceraldehyde 3-phosphate: step 4/5. In terms of biological role, catalyzes the reversible conversion of 2-phosphoglycerate (2-PG) into phosphoenolpyruvate (PEP). It is essential for the degradation of carbohydrates via glycolysis. The protein is Enolase of Bartonella bacilliformis (strain ATCC 35685 / KC583 / Herrer 020/F12,63).